Reading from the N-terminus, the 121-residue chain is MSSCSVSSLRRKRSEEVISFVVWFMPGESLLLNGNAESVLEVSSVTNVVDSFSFSKAGEVAGLNPSTTSAQYSFFNGFLGIFDFEVVYLYLCTNESDSDNIIRQKNLGRTMNCNNADDMLF.

This is an uncharacterized protein from Saccharomyces cerevisiae (strain ATCC 204508 / S288c) (Baker's yeast).